A 502-amino-acid polypeptide reads, in one-letter code: MRDPLTDCSYNKVYKSLKEFAQNGDNFCKQITSVLQQRANLEISYAKGLQKLAVKLSKALQSTKKNCLSTAWAWASESMKSAADLHQKLGKAIELEAIKPTHQVLSMQEKKRKSLDNEVEKSANLVINNWNQQIKAKKKLMMSTKKHEALFHLIESSKQSMTQKEKQKLLNKLKKSTEKLEKEDESYYQKNMAGYSTRLKWESTLEKCYKSMLELEKERIQLLCNNLNQYSQHISLFGQTLTTCHTQIHCAISKVDVEKDIQALMEETAVLSLENKSELLLADYFEEDPKNPMDKERRKSLIKPKLWRLQKDIEKASRDKEGLEQKLKALASSASFSDAKSQKDAETLMDENSLKLDLLQANSYKLSTVLADLEQRPKPCHPCSNCIFKWKEKEHSHSYVKISRPLLTKRLEKAESKAPAGEQNNPSSSRPGSSVSQGNNQLCKALYTFQARQDDELNLEKGDIVTIHEKKEEGWWFGSLNGKKGHFPAAYVEELPPKAGQA.

The 260-residue stretch at Met-1 to Asp-260 folds into the F-BAR domain. Ser-114 carries the phosphoserine modification. 2 coiled-coil regions span residues Ser-160–Tyr-230 and Lys-305–Ser-335. One can recognise an REM-1 domain in the interval Pro-292–Asp-372. Positions Lys-413–Gln-437 are disordered. The span at Gln-423–Gln-437 shows a compositional bias: low complexity. Residues Gly-438 to Pro-497 enclose the SH3 domain. Ser-479 carries the post-translational modification Phosphoserine.

Homotrimer. Interacts with DAB2. Interacts with NOS3, WASL and CAV1. Interacts (via SH3 domain) with DNM2; this interaction allows the recruitment of NOS3 to dynamin-positive structures. In terms of tissue distribution, over-expressed in brain microcapillaries from spontaneously hypertensive rats.

The protein localises to the cell membrane. Its subcellular location is the cytoplasmic vesicle. The protein resides in the cytoplasm. It is found in the cytoskeleton. It localises to the nucleus. In terms of biological role, multivalent adapter protein which may decrease NOS3 activity by inducing its translocation away from the plasma membrane. In Rattus norvegicus (Rat), this protein is Nostrin.